The primary structure comprises 215 residues: Flagellin B1 (215 aa).

Positions 1-12 are excised as a propeptide; sequence MSVKNFMNNKKG.

This sequence belongs to the archaeal flagellin family.

It is found in the archaeal flagellum. Functionally, flagellin is the subunit protein which polymerizes to form the filaments of archaeal flagella. In Methanococcus vannielii (strain ATCC 35089 / DSM 1224 / JCM 13029 / OCM 148 / SB), this protein is Flagellin B1 (flaB1).